The following is a 193-amino-acid chain: Phosphatidylglycerophosphatase and protein-tyrosine phosphatase 1 (193 aa).

The N-terminal 31 residues, 1-31, are a transit peptide targeting the mitochondrion; sequence MAASAWLEAGLARVLFYPTLLYTVFRGRVGG. The region spanning 37–188 is the Tyrosine-protein phosphatase domain; that stretch reads WYHRIDHTVL…LKEFHKEIAA (152 aa). Lysine 85 carries the N6-succinyllysine modification. Cysteine 132 (phosphocysteine intermediate) is an active-site residue.

Belongs to the protein-tyrosine phosphatase family. Non-receptor class dual specificity subfamily. Interacts with STYXL1; the interaction inhibits PTPMT1 catalytic activity. As to expression, expressed in liver and in pancreatic beta cells.

It localises to the mitochondrion inner membrane. It catalyses the reaction O-phospho-L-tyrosyl-[protein] + H2O = L-tyrosyl-[protein] + phosphate. The catalysed reaction is O-phospho-L-seryl-[protein] + H2O = L-seryl-[protein] + phosphate. It carries out the reaction O-phospho-L-threonyl-[protein] + H2O = L-threonyl-[protein] + phosphate. The enzyme catalyses a 1,2-diacyl-sn-glycero-3-phospho-(1'-sn-glycero-3'-phosphate) + H2O = a 1,2-diacyl-sn-glycero-3-phospho-(1'-sn-glycerol) + phosphate. It catalyses the reaction 1,2-di-(9Z-octadecenoyl)-sn-glycero-3-phospho-(1'-sn-glycerol-3'-phosphate) + H2O = 1,2-di-(9Z-octadecenoyl)-sn-glycero-3-phospho-(1'-sn-glycerol) + phosphate. The catalysed reaction is 1,2-dioctanoyl-sn-glycero-3-phospho-(1D-myo-inositol-5-phosphate) + H2O = 1,2-dioctanoyl-sn-glycero-3-phospho-(1D-myo-inositol) + phosphate. It carries out the reaction a 1-acyl-2-hexanoyl-sn-glycero-3-phospho-(1D-myo-inositol-5-phosphate) + H2O = a 1-acyl-2-hexanoyl-sn-glycero-3-phospho-(1D-myo-inositol) + phosphate. The enzyme catalyses 1,2-dibutyryl-sn-glycero-3-phospho-(1D-myo-inositol-5-phosphate) + H2O = 1,2-dibutyryl-sn-glycero-3-phospho-(1D-myo-inositol) + phosphate. Its pathway is phospholipid metabolism; phosphatidylglycerol biosynthesis; phosphatidylglycerol from CDP-diacylglycerol: step 2/2. Functionally, lipid phosphatase which dephosphorylates phosphatidylglycerophosphate (PGP) to phosphatidylglycerol (PG). PGP is an essential intermediate in the biosynthetic pathway of cardiolipin, a mitochondrial-specific phospholipid regulating the membrane integrity and activities of the organelle. Has also been shown to display phosphatase activity toward phosphoprotein substrates, specifically mediates dephosphorylation of mitochondrial proteins, thereby playing an essential role in ATP production. Has probably a preference for proteins phosphorylated on Ser and/or Thr residues compared to proteins phosphorylated on Tyr residues. Probably involved in regulation of insulin secretion in pancreatic beta cells. May prevent intrinsic apoptosis, probably by regulating mitochondrial membrane integrity. The sequence is that of Phosphatidylglycerophosphatase and protein-tyrosine phosphatase 1 from Rattus norvegicus (Rat).